The sequence spans 686 residues: Heat shock 70 kDa protein 12B (686 aa).

The tract at residues 12-53 is disordered; sequence LYIGSSPERSPVPSPPGSPRTQESCGIAPLTPSQSPKPEVRA. S25 and S29 each carry phosphoserine. T42 carries the post-translational modification Phosphothreonine. A phosphoserine mark is found at S44, S46, and S276.

It belongs to the heat shock protein 70 family. As to expression, highest expression in muscle and heart. Lower levels in liver and kidney.

This is Heat shock 70 kDa protein 12B (HSPA12B) from Homo sapiens (Human).